We begin with the raw amino-acid sequence, 287 residues long: Phosphatidylglycerol--prolipoprotein diacylglyceryl transferase (287 aa).

Transmembrane regions (helical) follow at residues 15 to 35 (IGPL…ILAI), 55 to 75 (FVMF…VFFE), 90 to 110 (IWEG…TAIV), and 117 to 137 (VSFW…QAIG). Arg138 contributes to the a 1,2-diacyl-sn-glycero-3-phospho-(1'-sn-glycerol) binding site. The next 2 membrane-spanning stretches (helical) occupy residues 180 to 200 (HPTF…LLLL) and 238 to 258 (IIRT…IFII).

It belongs to the Lgt family.

The protein localises to the cell membrane. The enzyme catalyses L-cysteinyl-[prolipoprotein] + a 1,2-diacyl-sn-glycero-3-phospho-(1'-sn-glycerol) = an S-1,2-diacyl-sn-glyceryl-L-cysteinyl-[prolipoprotein] + sn-glycerol 1-phosphate + H(+). It participates in protein modification; lipoprotein biosynthesis (diacylglyceryl transfer). Its function is as follows. Catalyzes the transfer of the diacylglyceryl group from phosphatidylglycerol to the sulfhydryl group of the N-terminal cysteine of a prolipoprotein, the first step in the formation of mature lipoproteins. The chain is Phosphatidylglycerol--prolipoprotein diacylglyceryl transferase from Oceanobacillus iheyensis (strain DSM 14371 / CIP 107618 / JCM 11309 / KCTC 3954 / HTE831).